Consider the following 1770-residue polypeptide: Transposon Ty2-F Gag-Pol polyprotein (1770 aa).

Composition is skewed to polar residues over residues 1–11 (MESQQLHQNPH), 19–39 (ASVTSKEVPSNQDPLAVSASN), and 49–60 (KVNSQQETTPGT). Disordered regions lie at residues 1–86 (MESQ…GQYQ) and 359–453 (QHSE…LPDH). Residues 295–397 (ENNINVSDRL…SSKPRAAKAH (103 aa)) form an RNA-binding region. Residues 369–381 (TSPNTTNTKVTTR) show a composition bias toward low complexity. 2 stretches are compositionally biased toward polar residues: residues 399–408 (IATSSKFSRV) and 415–435 (ESTVSSQYLSDDNELSLGQQQ). Aspartate 457 acts as the For protease activity; shared with dimeric partner in catalysis. The segment at 579–636 (NVNKSKSVNKYPYPLIHRMLGHANFRSIQKSLKKNAVTYLKESDIEWSNASTYQCPDC) is integrase-type zinc finger-like. An Integrase catalytic domain is found at 656–831 (ESYEPFQYLH…AGLDITTILP (176 aa)). Mg(2+) is bound by residues aspartate 667 and aspartate 732. 4 disordered regions span residues 1004–1034 (MGGTVESDTTSPRHSSTFTARNQNRPGSTNE), 1059–1135 (TEEP…KSSK), 1146–1165 (LPLPDLTHKSPTDTSDVSKD), and 1170–1205 (HSRQTNSSLGGMDDSNVLTTTKSKKRSLEDNETEIE). Composition is skewed to polar residues over residues 1009–1034 (ESDTTSPRHSSTFTARNQNRPGSTNE) and 1065–1082 (QRNSDTNIKYRTTNSTPS). A compositionally biased stretch (basic and acidic residues) spans 1151–1165 (LTHKSPTDTSDVSKD). A Bipartite nuclear localization signal motif is present at residues 1193 to 1227 (KKRSLEDNETEIEVSRDTWNNKNMRSLEPPRSKKR). The Reverse transcriptase Ty1/copia-type domain maps to 1353–1491 (NDYYITQLDI…DILGLEIKYQ (139 aa)). Mg(2+) is bound by residues aspartate 1361, aspartate 1442, aspartate 1443, aspartate 1625, glutamate 1667, and aspartate 1700. An RNase H Ty1/copia-type domain is found at 1625-1767 (DASYGNQPYY…IKTFKLLTNK (143 aa)).

In terms of assembly, the capsid protein forms a homotrimer, from which the VLPs are assembled. The protease is a homodimer, whose active site consists of two apposed aspartic acid residues. In terms of processing, initially, virus-like particles (VLPs) are composed of the structural unprocessed proteins Gag and Gag-Pol, and also contain the host initiator methionine tRNA (tRNA(i)-Met) which serves as a primer for minus-strand DNA synthesis, and a dimer of genomic Ty RNA. Processing of the polyproteins occurs within the particle and proceeds by an ordered pathway, called maturation. First, the protease (PR) is released by autocatalytic cleavage of the Gag-Pol polyprotein, and this cleavage is a prerequisite for subsequent processing at the remaining sites to release the mature structural and catalytic proteins. Maturation takes place prior to the RT reaction and is required to produce transposition-competent VLPs.

The protein resides in the cytoplasm. The protein localises to the nucleus. It carries out the reaction DNA(n) + a 2'-deoxyribonucleoside 5'-triphosphate = DNA(n+1) + diphosphate. The catalysed reaction is Endonucleolytic cleavage to 5'-phosphomonoester.. In terms of biological role, capsid protein (CA) is the structural component of the virus-like particle (VLP), forming the shell that encapsulates the retrotransposons dimeric RNA genome. The particles are assembled from trimer-clustered units and there are holes in the capsid shells that allow for the diffusion of macromolecules. CA also has nucleocapsid-like chaperone activity, promoting primer tRNA(i)-Met annealing to the multipartite primer-binding site (PBS), dimerization of Ty2 RNA and initiation of reverse transcription. The aspartyl protease (PR) mediates the proteolytic cleavages of the Gag and Gag-Pol polyproteins after assembly of the VLP. Functionally, reverse transcriptase/ribonuclease H (RT) is a multifunctional enzyme that catalyzes the conversion of the retro-elements RNA genome into dsDNA within the VLP. The enzyme displays a DNA polymerase activity that can copy either DNA or RNA templates, and a ribonuclease H (RNase H) activity that cleaves the RNA strand of RNA-DNA heteroduplexes during plus-strand synthesis and hydrolyzes RNA primers. The conversion leads to a linear dsDNA copy of the retrotransposon that includes long terminal repeats (LTRs) at both ends. Its function is as follows. Integrase (IN) targets the VLP to the nucleus, where a subparticle preintegration complex (PIC) containing at least integrase and the newly synthesized dsDNA copy of the retrotransposon must transit the nuclear membrane. Once in the nucleus, integrase performs the integration of the dsDNA into the host genome. The protein is Transposon Ty2-F Gag-Pol polyprotein (TY2B-F) of Saccharomyces cerevisiae (strain ATCC 204508 / S288c) (Baker's yeast).